The sequence spans 336 residues: Pyridoxal 5'-phosphate synthase subunit PdxS (336 aa).

Residue D30 participates in D-ribose 5-phosphate binding. Catalysis depends on K87, which acts as the Schiff-base intermediate with D-ribose 5-phosphate. G159 serves as a coordination point for D-ribose 5-phosphate. R171 is a D-glyceraldehyde 3-phosphate binding site. Residues G257 and 278-279 (GS) contribute to the D-ribose 5-phosphate site.

This sequence belongs to the PdxS/SNZ family. In terms of assembly, in the presence of PdxT, forms a dodecamer of heterodimers.

The enzyme catalyses aldehydo-D-ribose 5-phosphate + D-glyceraldehyde 3-phosphate + L-glutamine = pyridoxal 5'-phosphate + L-glutamate + phosphate + 3 H2O + H(+). It functions in the pathway cofactor biosynthesis; pyridoxal 5'-phosphate biosynthesis. In terms of biological role, catalyzes the formation of pyridoxal 5'-phosphate from ribose 5-phosphate (RBP), glyceraldehyde 3-phosphate (G3P) and ammonia. The ammonia is provided by the PdxT subunit. Can also use ribulose 5-phosphate and dihydroxyacetone phosphate as substrates, resulting from enzyme-catalyzed isomerization of RBP and G3P, respectively. The chain is Pyridoxal 5'-phosphate synthase subunit PdxS from Thermoplasma volcanium (strain ATCC 51530 / DSM 4299 / JCM 9571 / NBRC 15438 / GSS1).